Reading from the N-terminus, the 1216-residue chain is 1-phosphatidylinositol 4,5-bisphosphate phosphodiesterase beta-1 (1216 aa).

C17 carries S-palmitoyl cysteine lipidation. The residue at position 236 (S236) is a Phosphoserine. The 152-residue stretch at 316 to 467 folds into the PI-PLC X-box domain; the sequence is EDMSQPLSHY…LMYKILVKNK (152 aa). Catalysis depends on residues H331 and H378. Residue S417 is modified to Phosphoserine. Positions 469-534 are disordered; that stretch reads KSHKSSEGSG…MDEGTAGSEA (66 aa). A compositionally biased stretch (basic and acidic residues) spans 472 to 483; it reads KSSEGSGKKKLS. Over residues 491–501 the composition is skewed to low complexity; sequence SDSSSVFEPSS. The span at 507–518 shows a compositional bias: acidic residues; it reads ADTESDDDDDDD. A Phosphothreonine modification is found at T509. Phosphoserine is present on residues S511 and S582. The region spanning 540-656 is the PI-PLC Y-box domain; that stretch reads MSNLVNYIQP…GYRLKPEFMR (117 aa). The region spanning 656-786 is the C2 domain; it reads RRPDKHFDPF…RNERNQPLTL (131 aa). Disordered stretches follow at residues 834–891, 967–989, 1072–1095, and 1173–1216; these read DEEE…VKAP, EKSA…GSSA, MDKK…EEEK, and ISED…DTPL. Positions 846 to 868 are enriched in polar residues; sequence ETSSEAPSETRTTPAENGVNHTA. S887 bears the Phosphoserine; by PKC mark. The span at 967–979 shows a compositional bias: basic and acidic residues; sequence EKSAKKDSKKKSE. Phosphoserine occurs at positions 978 and 987. The span at 1075–1095 shows a compositional bias: basic and acidic residues; that stretch reads KRQEKITEAKSKDKSQMEEEK. A phosphoserine mark is found at S1197, S1199, and S1200. Residues 1205 to 1216 are compositionally biased toward basic and acidic residues; sequence RENPGREFDTPL.

As to quaternary structure, interacts with DGKQ. It depends on Ca(2+) as a cofactor. Post-translationally, palmitoylated. Palmitoylation at Cys-17 by ZDHHC21 regulates the signaling activity of PLCB1 and the function of the endothelial barrier. Palmitoylation by ZDHHC21 is stimulated by inflammation.

The protein localises to the nucleus membrane. It is found in the cytoplasm. It catalyses the reaction a 1,2-diacyl-sn-glycero-3-phospho-(1D-myo-inositol-4,5-bisphosphate) + H2O = 1D-myo-inositol 1,4,5-trisphosphate + a 1,2-diacyl-sn-glycerol + H(+). It carries out the reaction a 1,2-diacyl-sn-glycero-3-phospho-(1D-myo-inositol) + H2O = 1D-myo-inositol 1-phosphate + a 1,2-diacyl-sn-glycerol + H(+). In terms of biological role, catalyzes the hydrolysis of 1-phosphatidylinositol 4,5-bisphosphate into diacylglycerol (DAG) and inositol 1,4,5-trisphosphate (IP3) and mediates intracellular signaling downstream of G protein-coupled receptors. Regulates the function of the endothelial barrier. The sequence is that of 1-phosphatidylinositol 4,5-bisphosphate phosphodiesterase beta-1 from Mus musculus (Mouse).